Here is a 278-residue protein sequence, read N- to C-terminus: Hydroxyethylthiazole kinase (278 aa).

Methionine 46 is a substrate binding site. 2 residues coordinate ATP: arginine 122 and threonine 168. Glycine 195 provides a ligand contact to substrate.

The protein belongs to the Thz kinase family. It depends on Mg(2+) as a cofactor.

It catalyses the reaction 5-(2-hydroxyethyl)-4-methylthiazole + ATP = 4-methyl-5-(2-phosphooxyethyl)-thiazole + ADP + H(+). Its pathway is cofactor biosynthesis; thiamine diphosphate biosynthesis; 4-methyl-5-(2-phosphoethyl)-thiazole from 5-(2-hydroxyethyl)-4-methylthiazole: step 1/1. Its function is as follows. Catalyzes the phosphorylation of the hydroxyl group of 4-methyl-5-beta-hydroxyethylthiazole (THZ). The polypeptide is Hydroxyethylthiazole kinase (Chloroflexus aggregans (strain MD-66 / DSM 9485)).